The sequence spans 444 residues: Sensor protein CiaH (444 aa).

The next 2 membrane-spanning stretches (helical) occupy residues Phe21–Ser41 and Leu183–Ala203. The 216-residue stretch at Asn223–Thr438 folds into the Histidine kinase domain. At His226 the chain carries Phosphohistidine; by autocatalysis.

It localises to the cell membrane. It catalyses the reaction ATP + protein L-histidine = ADP + protein N-phospho-L-histidine.. In terms of biological role, member of the two-component regulatory system CiaH/CiaR. Involved in early steps of competence regulation and in penicillin susceptibility. Probably phosphorylates CiaR. This Streptococcus pneumoniae serotype 4 (strain ATCC BAA-334 / TIGR4) protein is Sensor protein CiaH (ciaH).